Here is a 420-residue protein sequence, read N- to C-terminus: Phytoene synthase 1, chloroplastic (420 aa).

The N-terminal 70 residues, 1–70 (MAAITLLRSA…GEIARTSPVY (70 aa)), are a transit peptide targeting the chloroplast.

This sequence belongs to the phytoene/squalene synthase family. As to expression, expressed in leaves. Highly expressed in developing leaves. Expressed at low levels in roots.

Its subcellular location is the plastid. It localises to the chloroplast membrane. The protein resides in the chloroplast. The protein localises to the plastoglobule. The enzyme catalyses 2 (2E,6E,10E)-geranylgeranyl diphosphate = 15-cis-phytoene + 2 diphosphate. In terms of biological role, catalyzes the conversion of geranylgeranyl diphosphate to phytoene. Mediates the first committed step in carotenoid biosynthesis. The chain is Phytoene synthase 1, chloroplastic from Oryza sativa subsp. japonica (Rice).